The chain runs to 688 residues: Elongation factor G (688 aa).

The region spanning 8 to 282 (ERTRNIGIMA…AVLDYLPAPT (275 aa)) is the tr-type G domain. Residues 17–24 (AHIDAGKT), 81–85 (DTPGH), and 135–138 (NKMD) contribute to the GTP site.

This sequence belongs to the TRAFAC class translation factor GTPase superfamily. Classic translation factor GTPase family. EF-G/EF-2 subfamily.

It localises to the cytoplasm. In terms of biological role, catalyzes the GTP-dependent ribosomal translocation step during translation elongation. During this step, the ribosome changes from the pre-translocational (PRE) to the post-translocational (POST) state as the newly formed A-site-bound peptidyl-tRNA and P-site-bound deacylated tRNA move to the P and E sites, respectively. Catalyzes the coordinated movement of the two tRNA molecules, the mRNA and conformational changes in the ribosome. The polypeptide is Elongation factor G (Clostridioides difficile (strain 630) (Peptoclostridium difficile)).